The following is a 238-amino-acid chain: Protein G1-like8 (238 aa).

2 disordered regions span residues M1–S33 and K147–V238. The segment covering G10–Q27 has biased composition (low complexity). Residues R30–K157 enclose the ALOG domain. Residues K155–K159 carry the Nuclear localization signal motif. The segment covering Q165 to H176 has biased composition (pro residues). 2 stretches are compositionally biased toward low complexity: residues Q177–Q213 and T222–V238.

It belongs to the plant homeotic and developmental regulators ALOG protein family.

It is found in the nucleus. Its function is as follows. Probable transcription regulator that acts as a developmental regulator by promoting cell growth in response to light. This is Protein G1-like8 (G1L8) from Oryza sativa subsp. japonica (Rice).